The following is a 471-amino-acid chain: Retrovirus-related Env polyprotein from transposon 297 (471 aa).

N-linked (GlcNAc...) asparagine glycosylation is found at Asn3, Asn59, Asn167, Asn325, Asn363, Asn383, and Asn403.

This is Retrovirus-related Env polyprotein from transposon 297 (env) from Drosophila melanogaster (Fruit fly).